An 84-amino-acid polypeptide reads, in one-letter code: Small ribosomal subunit protein uS17 (84 aa).

It belongs to the universal ribosomal protein uS17 family. As to quaternary structure, part of the 30S ribosomal subunit.

One of the primary rRNA binding proteins, it binds specifically to the 5'-end of 16S ribosomal RNA. This chain is Small ribosomal subunit protein uS17, found in Sodalis glossinidius (strain morsitans).